The chain runs to 386 residues: Methionine aminopeptidase 1 (386 aa).

A C6H2-type zinc finger spans residues 6 to 59; it reads TRECETEGCHSEAKLQCPTCIKLGIQGSYFCSQECFKGSWATHKLLHKKAKEDK. Positions 9, 14, 22, 25, 36, 40, 48, and 52 each coordinate Zn(2+). An a protein-binding site is contributed by H202. 3 residues coordinate Zn(2+): D219, D230, and H293. H300 serves as a coordination point for a protein. 2 residues coordinate Zn(2+): E326 and E357.

It belongs to the peptidase M24A family. Methionine aminopeptidase type 1 subfamily. Associates with the 60S ribosomal subunit of the 80S translational complex. Zn(2+) serves as cofactor. Requires Co(2+) as cofactor. The cofactor is Mn(2+). It depends on Fe(2+) as a cofactor.

Its subcellular location is the cytoplasm. The catalysed reaction is Release of N-terminal amino acids, preferentially methionine, from peptides and arylamides.. Functionally, cotranslationally removes the N-terminal methionine from nascent proteins. The N-terminal methionine is often cleaved when the second residue in the primary sequence is small and uncharged (Met-Ala-, Cys, Gly, Pro, Ser, Thr, or Val). The protein is Methionine aminopeptidase 1 (metap1) of Danio rerio (Zebrafish).